The sequence spans 122 residues: MFKKVSKNANRLSRHQRVRNKITGTPERPRLNVYRSLTNIYVQLIDDVAGKTLVAASSLDKEIKDQVSATGNAEAAKLVGQLVGKRALEKGIDTVTFDRGGNIYHGRIQALAEGAREAGLKF.

Positions 1–20 are disordered; sequence MFKKVSKNANRLSRHQRVRN.

The protein belongs to the universal ribosomal protein uL18 family. In terms of assembly, part of the 50S ribosomal subunit; part of the 5S rRNA/L5/L18/L25 subcomplex. Contacts the 5S and 23S rRNAs.

Functionally, this is one of the proteins that bind and probably mediate the attachment of the 5S RNA into the large ribosomal subunit, where it forms part of the central protuberance. This chain is Large ribosomal subunit protein uL18, found in Alkaliphilus oremlandii (strain OhILAs) (Clostridium oremlandii (strain OhILAs)).